The primary structure comprises 469 residues: DNA repair and recombination protein rad22 (469 aa).

The tract at residues 265 to 296 (PAANNHHSEKAGTQINNKDKGSHNSAKPVQRS) is disordered. Residues 287-296 (HNSAKPVQRS) are compositionally biased toward polar residues. Phosphoserine is present on residues serine 296 and serine 319. The interval 429-469 (LHDSTTSHNKSDLMRTNSDPQSAMRSRENYDATVDKKAKKG) is disordered. Positions 431 to 452 (DSTTSHNKSDLMRTNSDPQSAM) are enriched in polar residues. Basic and acidic residues predominate over residues 453 to 469 (RSRENYDATVDKKAKKG).

The protein belongs to the RAD52 family. Interacts with rhp51.

Its subcellular location is the nucleus. Its function is as follows. Active in the repair of DNA damage and in mating-type switching. Probably involved in the repair of DNA double-strands breaks. Has a role in promoting S phase completion. The polypeptide is DNA repair and recombination protein rad22 (rad22) (Schizosaccharomyces pombe (strain 972 / ATCC 24843) (Fission yeast)).